A 555-amino-acid chain; its full sequence is Beta-hexosaminidase A (555 aa).

An N-terminal signal peptide occupies residues 1–18 (MRLLIPILIFALITTAVT). A glycan (N-linked (GlcNAc...) asparagine) is linked at asparagine 47. Glutamate 325 acts as the Proton donor in catalysis. Residues asparagine 351, asparagine 412, and asparagine 460 are each glycosylated (N-linked (GlcNAc...) asparagine).

Belongs to the glycosyl hydrolase 20 family. As to expression, expressed in coelomocytes and neurons of the pharyngeal region and nerve cord.

The protein localises to the lysosome. It carries out the reaction Hydrolysis of terminal non-reducing N-acetyl-D-hexosamine residues in N-acetyl-beta-D-hexosaminides.. Functionally, responsible for the degradation of GM2 gangliosides, and a variety of other molecules containing terminal N-acetyl hexosamines. Degrades chitotriose. This Caenorhabditis elegans protein is Beta-hexosaminidase A (hex-1).